Here is a 624-residue protein sequence, read N- to C-terminus: Probable potassium transport system protein Kup 1 (624 aa).

12 consecutive transmembrane segments (helical) span residues 10-30, 48-68, 94-114, 133-153, 159-179, 210-230, 242-262, 270-290, 331-351, 363-383, 388-408, and 413-433; these read LALG…LYAL, LSLI…MIIF, PLFY…GMLT, LYPY…SLQA, IGYL…ILGI, FLLG…ADIG, FFIA…NLIV, PFFM…ATVA, IYVP…CLAF, IAVN…AVSI, TFNV…FLGA, and FITG…IMYS.

It belongs to the HAK/KUP transporter (TC 2.A.72) family.

The protein localises to the cell inner membrane. It catalyses the reaction K(+)(in) + H(+)(in) = K(+)(out) + H(+)(out). In terms of biological role, transport of potassium into the cell. Likely operates as a K(+):H(+) symporter. The sequence is that of Probable potassium transport system protein Kup 1 from Legionella pneumophila subsp. pneumophila (strain Philadelphia 1 / ATCC 33152 / DSM 7513).